We begin with the raw amino-acid sequence, 577 residues long: External alternative NAD(P)H-ubiquinone oxidoreductase B1, mitochondrial (577 aa).

The N-terminal 35 residues, 1–35, are a transit peptide targeting the mitochondrion; it reads MRGFTYLSKVLHSHSSYSKLLVLCSVSTGGLLVYA. 57–87 contributes to the FAD binding site; sequence RVVVLGTGWGGTSFLKDVDISSYDVQVVSPR. Residue 221-257 coordinates NAD(+); sequence LHFVIVGGGPTGVEFAAELHDYVYEDLVKIYPSVKDF. Residues 378–413 enclose the EF-hand domain; that stretch reads KVMEDISAIFKAADKDDSGTLSIEEFRDVLEDIIIR. Positions 391, 393, 395, 397, and 402 each coordinate Ca(2+). The short motif at 568–577 is the Microbody targeting signal element; that stretch reads YIFGRDSSRI.

Belongs to the NADH dehydrogenase family. FAD is required as a cofactor.

The protein localises to the mitochondrion inner membrane. It localises to the peroxisome. The catalysed reaction is a quinone + NADH + H(+) = a quinol + NAD(+). The enzyme catalyses a ubiquinone + NADH + H(+) = a ubiquinol + NAD(+). Activity is calcium-dependent with a more pronounced effect at higher pH. In terms of biological role, alternative NADH-ubiquinone oxidoreductase which catalyzes the oxidation of mitochondrial NADH does not translocate protons across the inner mitochondrial membrane. Calcium-dependent NAD(P)H dehydrogenase. Binds calcium ions. In Solanum tuberosum (Potato), this protein is External alternative NAD(P)H-ubiquinone oxidoreductase B1, mitochondrial (NDB1).